We begin with the raw amino-acid sequence, 264 residues long: H-2 class II histocompatibility antigen, E-Q beta chain (264 aa).

A signal peptide spans 1–26 (MVWLPRVPCVAAVILLLTVLSPPVAL). The segment at 27–121 (VRDSRPWFLE…IFDNFLVRRR (95 aa)) is beta-1. Over 27–225 (VRDSRPWFLE…KAQSTSAQNK (199 aa)) the chain is Extracellular. Cystine bridges form between C38-C106 and C144-C200. N46 carries N-linked (GlcNAc...) asparagine glycosylation. The tract at residues 122–225 (VEPTVTVYPT…KAQSTSAQNK (104 aa)) is beta-2. The region spanning 124–214 (PTVTVYPTKT…PSLTDPVTVE (91 aa)) is the Ig-like C1-type domain. Residues 226–246 (MLSGVGGFVLGLLFLGAGLFI) traverse the membrane as a helical segment. Over 247–264 (YFRNQKGQSGLQPTGLLS) the chain is Cytoplasmic.

The protein belongs to the MHC class II family.

The protein resides in the membrane. The chain is H-2 class II histocompatibility antigen, E-Q beta chain from Mus musculus (Mouse).